Consider the following 150-residue polypeptide: Small ribosomal subunit protein eS19 (150 aa).

This sequence belongs to the eukaryotic ribosomal protein eS19 family. Part of the 30S ribosomal subunit.

Functionally, may be involved in maturation of the 30S ribosomal subunit. This Thermoplasma acidophilum (strain ATCC 25905 / DSM 1728 / JCM 9062 / NBRC 15155 / AMRC-C165) protein is Small ribosomal subunit protein eS19.